The chain runs to 224 residues: Putative gastrointestinal growth factor xP4 (224 aa).

The N-terminal stretch at 1 to 17 (MANSVFWAIAVALVLGA) is a signal peptide. 4 P-type domains span residues 25-68 (YRCG…YTPW), 73-117 (TICN…YQPI), 123-167 (RDCS…FKPE), and 173-216 (LQCA…FYPD). Disulfide bonds link Cys-27/Cys-53, Cys-37/Cys-52, Cys-47/Cys-64, Cys-75/Cys-102, Cys-86/Cys-101, Cys-96/Cys-113, Cys-125/Cys-152, Cys-136/Cys-151, Cys-146/Cys-163, Cys-175/Cys-201, Cys-185/Cys-200, and Cys-195/Cys-212. Residue Asn-104 is glycosylated (N-linked (GlcNAc...) asparagine).

Post-translationally, glycosylated. As to expression, stomach mucosa.

The protein localises to the secreted. Functionally, may act as a growth factor. The protein is Putative gastrointestinal growth factor xP4 (p4) of Xenopus laevis (African clawed frog).